Consider the following 69-residue polypeptide: Conotoxin Eb6.22 (69 aa).

The N-terminal stretch at 1–17 (VLIIAVLFLTACQLTTA) is a signal peptide. The propeptide occupies 18–41 (ETYSRGRQKHRARRSTDKNSKWTR). 3 disulfide bridges follow: C43-C57, C50-C61, and C56-C68.

It belongs to the conotoxin O1 superfamily. As to expression, expressed by the venom duct.

Its subcellular location is the secreted. The chain is Conotoxin Eb6.22 (E1) from Conus ebraeus (Hebrew cone).